The chain runs to 248 residues: ATP synthase subunit a (248 aa).

6 consecutive transmembrane segments (helical) span residues 34 to 54 (TNVT…LVAG), 91 to 111 (YFPY…LGLI), 121 to 141 (IAVT…IGFV), 147 to 167 (FLSL…LAVI), 197 to 217 (FAGF…VMAI), and 220 to 240 (LEVL…CVYL).

It belongs to the ATPase A chain family. In terms of assembly, F-type ATPases have 2 components, CF(1) - the catalytic core - and CF(0) - the membrane proton channel. CF(1) has five subunits: alpha(3), beta(3), gamma(1), delta(1), epsilon(1). CF(0) has four main subunits: a, b, b' and c.

The protein resides in the cell inner membrane. Key component of the proton channel; it plays a direct role in the translocation of protons across the membrane. In Dinoroseobacter shibae (strain DSM 16493 / NCIMB 14021 / DFL 12), this protein is ATP synthase subunit a.